Consider the following 668-residue polypeptide: Bestrophin-3 (668 aa).

At 1 to 31 the chain is on the cytoplasmic side; it reads MTVTYSSKVANATFFGFHRLLLKWRGSIYKL. Residue Ala10 coordinates Ca(2+). Residues 32 to 51 form a helical membrane-spanning segment; sequence LYREFIVFAVLYTAISLVYR. Residues 52-60 lie on the Extracellular side of the membrane; sequence LLLTGVQKR. Residues 61–82 traverse the membrane as a helical segment; that stretch reads YFEKLSIYCDRYAEQIPVTFVL. Residues 83–237 lie on the Cytoplasmic side of the membrane; the sequence is GFYVTLVVNR…DWVGIPLVYT (155 aa). A helical transmembrane segment spans residues 238–255; the sequence is QVVTLAVYTFFFACLIGR. Topologically, residues 256 to 274 are extracellular; that stretch reads QFLDPTKGYAGHDLDLYIP. The chain crosses the membrane as a helical span at residues 275 to 288; the sequence is IFTLLQFFFYAGWL. Residues 289–668 are Cytoplasmic-facing; it reads KVAEQLINPF…LNKETEESPK (380 aa). Ca(2+)-binding residues include Gln293, Asn296, Asp301, and Asp304. Disordered regions lie at residues 400–454, 473–493, and 532–570; these read SAHE…KKSC, RETS…VRTS, and TGVQ…VSAS. Residues 425–436 show a composition bias toward basic and acidic residues; sequence PRDDLSPARDLL. Residues 475 to 489 are compositionally biased toward low complexity; that stretch reads TSQTSTLQSLTPQSS. The span at 532 to 545 shows a compositional bias: polar residues; sequence TGVQPSKTEQQQGP.

The protein belongs to the anion channel-forming bestrophin (TC 1.A.46) family. Calcium-sensitive chloride channel subfamily. As to expression, present in skeletal muscle and weakly in brain, spinal cord, bone marrow and retina.

The protein localises to the cell membrane. It catalyses the reaction chloride(in) = chloride(out). Ligand-gated anion channel that allows the movement of chloride monoatomic anions across cell membranes when activated by calcium (Ca2+). The polypeptide is Bestrophin-3 (Homo sapiens (Human)).